A 463-amino-acid chain; its full sequence is METLLVVLHVFILFLLILGLFVMQKKHVSFSKRVFTALGLGIVFGFALQLIYGPTSNIVIQTADWFNIAGGGYVKLLQMVVMPLVFISILGAFTKLKLTKNLGKISGLIIGILVATTAVAAAVGIASALSFDLQAIQVDQGSTELSRGQELQQKSEDMTAKTLPQQIVELLPGNPFLDFTGARPTSTIAVVIFAAFLGVAFLGVKHKQPEQAETFKKLVDAVYAIVMRVVTLILRLTPYGVLAIMTKTIATSDLDSILKLGMFVIASYAALITMFIIHLLLLTFSGLNPVIYLKKAVPVLVFAFTSRSSAGALPLNIKTQRSMGVPEGIANFAGSFGLSIGQNGCAGIYPAMLAMMIAPTVGQNPFDPVFIITVIAVVAISSFGVAGVGGGATFAALLVLSSLNMPVALAGLLISIEPLIDMGRTALNVSGSMTSGLITSKVTKEIDQGAFHDQSRVIEAEEA.

10 helical membrane-spanning segments follow: residues 3-23 (TLLV…LFVM), 34-54 (VFTA…IYGP), 73-93 (YVKL…LGAF), 105-125 (ISGL…AVGI), 184-204 (PTST…FLGV), 225-245 (IVMR…LAIM), 262-282 (MFVI…LLLL), 338-358 (LSIG…MMIA), 369-389 (VFII…AGVG), and 394-414 (FAAL…GLLI).

The protein belongs to the dicarboxylate/amino acid:cation symporter (DAACS) (TC 2.A.23) family.

It localises to the cell membrane. Its function is as follows. Mediates uptake of L-cystine, the oxidized form of L-cysteine. Although it is more specific for L-cystine, it could also transport a much broader range of amino acids and sulfur compounds including S-methylcysteine. The polypeptide is L-cystine uptake protein TcyP (tcyP) (Bacillus subtilis (strain 168)).